Reading from the N-terminus, the 270-residue chain is Probable 6-oxopurine nucleoside phosphorylase (270 aa).

Phosphate contacts are provided by residues Ser-10 and 48–49; that span reads RH. Residue Met-191 participates in substrate binding. Position 192 (Thr-192) interacts with phosphate. 215–217 is a substrate binding site; it reads NYA.

Belongs to the PNP/MTAP phosphorylase family. MTAP subfamily. As to quaternary structure, homohexamer. Dimer of a homotrimer.

The enzyme catalyses a purine D-ribonucleoside + phosphate = a purine nucleobase + alpha-D-ribose 1-phosphate. It functions in the pathway purine metabolism; purine nucleoside salvage. Functionally, purine nucleoside phosphorylase which is highly specific for 6-oxopurine nucleosides. Cleaves guanosine or inosine to respective bases and sugar-1-phosphate molecules. Involved in purine salvage. The sequence is that of Probable 6-oxopurine nucleoside phosphorylase from Korarchaeum cryptofilum (strain OPF8).